A 421-amino-acid polypeptide reads, in one-letter code: Phosphoribosylamine--glycine ligase (421 aa).

The ATP-grasp domain maps to 108-314; the sequence is KEIMVKYNVP…FAQNIDDIMM (207 aa). 134-195 serves as a coordination point for ATP; that stretch reads IEEQGAPIVV…EEFLDGEEFS (62 aa). The Mg(2+) site is built by E284 and N286.

Belongs to the GARS family. Mg(2+) is required as a cofactor. It depends on Mn(2+) as a cofactor.

The catalysed reaction is 5-phospho-beta-D-ribosylamine + glycine + ATP = N(1)-(5-phospho-beta-D-ribosyl)glycinamide + ADP + phosphate + H(+). It participates in purine metabolism; IMP biosynthesis via de novo pathway; N(1)-(5-phospho-D-ribosyl)glycinamide from 5-phospho-alpha-D-ribose 1-diphosphate: step 2/2. This chain is Phosphoribosylamine--glycine ligase, found in Streptococcus pyogenes serotype M6 (strain ATCC BAA-946 / MGAS10394).